Reading from the N-terminus, the 248-residue chain is UPF0246 protein RC0754 (248 aa).

The protein belongs to the UPF0246 family.

The protein is UPF0246 protein RC0754 of Rickettsia conorii (strain ATCC VR-613 / Malish 7).